Reading from the N-terminus, the 540-residue chain is Chaperonin GroEL (540 aa).

ATP-binding positions include 29–32, 86–90, Gly-413, and Asp-495; these read TLGP and DGTTT.

The protein belongs to the chaperonin (HSP60) family. As to quaternary structure, forms a cylinder of 14 subunits composed of two heptameric rings stacked back-to-back. Interacts with the co-chaperonin GroES.

Its subcellular location is the cytoplasm. The catalysed reaction is ATP + H2O + a folded polypeptide = ADP + phosphate + an unfolded polypeptide.. Its function is as follows. Together with its co-chaperonin GroES, plays an essential role in assisting protein folding. The GroEL-GroES system forms a nano-cage that allows encapsulation of the non-native substrate proteins and provides a physical environment optimized to promote and accelerate protein folding. In Caldanaerobacter subterraneus subsp. tengcongensis (strain DSM 15242 / JCM 11007 / NBRC 100824 / MB4) (Thermoanaerobacter tengcongensis), this protein is Chaperonin GroEL.